The following is a 591-amino-acid chain: Aspartate--tRNA ligase (591 aa).

Residue Glu-173 coordinates L-aspartate. The interval 197–200 is aspartate; that stretch reads QLFK. Arg-219 contacts L-aspartate. Residues 219-221 and Gln-228 contribute to the ATP site; that span reads RDE. His-448 contributes to the L-aspartate binding site. ATP is bound at residue Glu-482. An L-aspartate-binding site is contributed by Arg-489. 534–537 serves as a coordination point for ATP; that stretch reads GLDR.

Belongs to the class-II aminoacyl-tRNA synthetase family. Type 1 subfamily. Homodimer.

It is found in the cytoplasm. The enzyme catalyses tRNA(Asp) + L-aspartate + ATP = L-aspartyl-tRNA(Asp) + AMP + diphosphate. In terms of biological role, catalyzes the attachment of L-aspartate to tRNA(Asp) in a two-step reaction: L-aspartate is first activated by ATP to form Asp-AMP and then transferred to the acceptor end of tRNA(Asp). The sequence is that of Aspartate--tRNA ligase from Shewanella oneidensis (strain ATCC 700550 / JCM 31522 / CIP 106686 / LMG 19005 / NCIMB 14063 / MR-1).